We begin with the raw amino-acid sequence, 552 residues long: Dihydroxy-acid dehydratase (552 aa).

Asp-78 lines the Mg(2+) pocket. Cys-119 serves as a coordination point for [2Fe-2S] cluster. Mg(2+)-binding residues include Asp-120 and Lys-121. Lys-121 carries the N6-carboxylysine modification. [2Fe-2S] cluster is bound at residue Cys-191. A Mg(2+)-binding site is contributed by Glu-442. Ser-468 acts as the Proton acceptor in catalysis.

Belongs to the IlvD/Edd family. As to quaternary structure, homodimer. Requires [2Fe-2S] cluster as cofactor. The cofactor is Mg(2+).

It carries out the reaction (2R)-2,3-dihydroxy-3-methylbutanoate = 3-methyl-2-oxobutanoate + H2O. The enzyme catalyses (2R,3R)-2,3-dihydroxy-3-methylpentanoate = (S)-3-methyl-2-oxopentanoate + H2O. The protein operates within amino-acid biosynthesis; L-isoleucine biosynthesis; L-isoleucine from 2-oxobutanoate: step 3/4. Its pathway is amino-acid biosynthesis; L-valine biosynthesis; L-valine from pyruvate: step 3/4. Functionally, functions in the biosynthesis of branched-chain amino acids. Catalyzes the dehydration of (2R,3R)-2,3-dihydroxy-3-methylpentanoate (2,3-dihydroxy-3-methylvalerate) into 2-oxo-3-methylpentanoate (2-oxo-3-methylvalerate) and of (2R)-2,3-dihydroxy-3-methylbutanoate (2,3-dihydroxyisovalerate) into 2-oxo-3-methylbutanoate (2-oxoisovalerate), the penultimate precursor to L-isoleucine and L-valine, respectively. The chain is Dihydroxy-acid dehydratase from Clostridium botulinum (strain Eklund 17B / Type B).